Here is a 439-residue protein sequence, read N- to C-terminus: Diaminopimelate decarboxylase (439 aa).

Position 66 is an N6-(pyridoxal phosphate)lysine (Lys66). Pyridoxal 5'-phosphate is bound by residues Gly248 and 290–293 (EPGR). Arg293, Arg330, and Tyr334 together coordinate substrate. Cys361 acts as the Proton donor in catalysis. Positions 362 and 390 each coordinate substrate. Tyr390 contributes to the pyridoxal 5'-phosphate binding site.

It belongs to the Orn/Lys/Arg decarboxylase class-II family. LysA subfamily. In terms of assembly, homodimer. Pyridoxal 5'-phosphate serves as cofactor.

It carries out the reaction meso-2,6-diaminopimelate + H(+) = L-lysine + CO2. Its pathway is amino-acid biosynthesis; L-lysine biosynthesis via DAP pathway; L-lysine from DL-2,6-diaminopimelate: step 1/1. Specifically catalyzes the decarboxylation of meso-diaminopimelate (meso-DAP) to L-lysine. The polypeptide is Diaminopimelate decarboxylase (Halalkalibacterium halodurans (strain ATCC BAA-125 / DSM 18197 / FERM 7344 / JCM 9153 / C-125) (Bacillus halodurans)).